The chain runs to 553 residues: Formate--tetrahydrofolate ligase 2 (553 aa).

63–70 (TSAGEGKS) serves as a coordination point for ATP.

This sequence belongs to the formate--tetrahydrofolate ligase family.

It carries out the reaction (6S)-5,6,7,8-tetrahydrofolate + formate + ATP = (6R)-10-formyltetrahydrofolate + ADP + phosphate. It functions in the pathway one-carbon metabolism; tetrahydrofolate interconversion. This is Formate--tetrahydrofolate ligase 2 from Lactobacillus acidophilus (strain ATCC 700396 / NCK56 / N2 / NCFM).